Reading from the N-terminus, the 222-residue chain is Imidazoleglycerol-phosphate dehydratase (222 aa).

Belongs to the imidazoleglycerol-phosphate dehydratase family.

It carries out the reaction D-erythro-1-(imidazol-4-yl)glycerol 3-phosphate = 3-(imidazol-4-yl)-2-oxopropyl phosphate + H2O. It functions in the pathway amino-acid biosynthesis; L-histidine biosynthesis; L-histidine from 5-phospho-alpha-D-ribose 1-diphosphate: step 6/9. In Scheffersomyces stipitis (strain ATCC 58785 / CBS 6054 / NBRC 10063 / NRRL Y-11545) (Yeast), this protein is Imidazoleglycerol-phosphate dehydratase (HIS3).